Here is a 324-residue protein sequence, read N- to C-terminus: Phospho-N-acetylmuramoyl-pentapeptide-transferase (324 aa).

Helical transmembrane passes span 9–29 (TFAV…PFLV), 53–73 (TMGA…FSFI), 77–97 (VSAA…LGFL), 117–137 (FLGQ…NDFA), 147–167 (IEVD…VGFS), 176–196 (LDGL…VIAF), 201–221 (MDVA…LLFN), 227–247 (IFMG…ISIL), 253–273 (LLLL…LQVF), and 304–324 (VLTF…VVIF).

This sequence belongs to the glycosyltransferase 4 family. MraY subfamily. The cofactor is Mg(2+).

It localises to the cell membrane. The enzyme catalyses UDP-N-acetyl-alpha-D-muramoyl-L-alanyl-gamma-D-glutamyl-meso-2,6-diaminopimeloyl-D-alanyl-D-alanine + di-trans,octa-cis-undecaprenyl phosphate = di-trans,octa-cis-undecaprenyl diphospho-N-acetyl-alpha-D-muramoyl-L-alanyl-D-glutamyl-meso-2,6-diaminopimeloyl-D-alanyl-D-alanine + UMP. The protein operates within cell wall biogenesis; peptidoglycan biosynthesis. Catalyzes the initial step of the lipid cycle reactions in the biosynthesis of the cell wall peptidoglycan: transfers peptidoglycan precursor phospho-MurNAc-pentapeptide from UDP-MurNAc-pentapeptide onto the lipid carrier undecaprenyl phosphate, yielding undecaprenyl-pyrophosphoryl-MurNAc-pentapeptide, known as lipid I. This chain is Phospho-N-acetylmuramoyl-pentapeptide-transferase, found in Listeria monocytogenes serovar 1/2a (strain ATCC BAA-679 / EGD-e).